The primary structure comprises 471 residues: 5-hydroxytryptamine receptor 2A (471 aa).

Residues 1–80 lie on the Extracellular side of the membrane; it reads MEILCEDNIS…LQEKNWSALL (80 aa). N-linked (GlcNAc...) asparagine glycans are attached at residues N8, N38, N44, N51, and N54. A helical membrane pass occupies residues 81–97; that stretch reads TTVVIILTIAGNILVIM. The Cytoplasmic segment spans residues 98–111; it reads AVSLEKKLQNATNY. A helical transmembrane segment spans residues 112–137; the sequence is FLMSLAIADMLLGFLVMPVSMLTILY. Residues 138 to 146 are Extracellular-facing; it reads GYRWPLPSK. A helical membrane pass occupies residues 147–171; sequence LCAIWIYLDVLFSTASIMHLCAISL. Residues C148 and C227 are joined by a disulfide bond. Serotonin is bound at residue D155. A DRY motif; important for ligand-induced conformation changes motif is present at residues 172–174; it reads DRY. Over 172 to 191 the chain is Cytoplasmic; sequence DRYVAIQNPIHHSRFNSRTK. Residues 192 to 215 form a helical membrane-spanning segment; that stretch reads AFLKIIAVWTISVGISMPIPVFGL. Topologically, residues 216 to 232 are extracellular; the sequence is QDDSKVFKEGSCLLADD. Residues 233-258 traverse the membrane as a helical segment; the sequence is NFVLIGSFVAFFIPLTIMVITYFLTI. The Cytoplasmic portion of the chain corresponds to 259–322; it reads KSLQKEATLC…QSISNEQKAC (64 aa). Residue S280 is modified to Phosphoserine. The helical transmembrane segment at 323-348 threads the bilayer; it reads KVLGIVFFLFVVMWCPFFITNIMAVI. Residue N343 participates in serotonin binding. Residues C349 and C353 are joined by a disulfide bond. Over 349–356 the chain is Extracellular; that stretch reads CKESCNEN. Residues 357–382 traverse the membrane as a helical segment; sequence VIGALLNVFVWIGYLSSAVNPLVYTL. An NPxxY motif; important for ligand-induced conformation changes and signaling motif is present at residues 376–380; that stretch reads NPLVY. At 383 to 471 the chain is on the cytoplasmic side; the sequence is FNKTYRSAFS…ETVNEKVSCV (89 aa). A PDZ-binding motif is present at residues 469 to 471; sequence SCV.

Belongs to the G-protein coupled receptor 1 family. As to quaternary structure, interacts (via C-terminus) with MPDZ and PATJ. May interact (via C-terminus) with MPP3, PRDX6, DLG4, DLG1, CASK, APBA1 and MAGI2. Interacts with GRM2 and DRD2; this may affect signaling. Detected in adult intestine, especially in mucosal epithelium, longitudinal and circular layers of muscularis externa and myenteric plexuses. Highly expressed in Paneth cells, and detected at lower levels in enterocytes (at protein level). Detected in brain cortex.

Its subcellular location is the cell membrane. The protein resides in the cell projection. The protein localises to the axon. It is found in the cytoplasmic vesicle. It localises to the membrane. Its subcellular location is the caveola. The protein resides in the dendrite. The protein localises to the presynapse. Its activity is regulated as follows. G-protein coupled receptor activity is regulated by lipids: oleamide increases HTR2A-mediated activity. G-protein coupled receptor for 5-hydroxytryptamine (serotonin). Also functions as a receptor for various drugs and psychoactive substances, including mescaline, psilocybin, 1-(2,5-dimethoxy-4-iodophenyl)-2-aminopropane (DOI) and lysergic acid diethylamide (LSD). Ligand binding causes a conformation change that triggers signaling via guanine nucleotide-binding proteins (G proteins) and modulates the activity of downstream effectors. HTR2A is coupled to G(q)/G(11) G alpha proteins and activates phospholipase C-beta, releasing diacylglycerol (DAG) and inositol 1,4,5-trisphosphate (IP3) second messengers that modulate the activity of phosphatidylinositol 3-kinase and promote the release of Ca(2+) ions from intracellular stores, respectively. Beta-arrestin family members inhibit signaling via G proteins and mediate activation of alternative signaling pathways. Affects neural activity, perception, cognition and mood. Plays a role in the regulation of behavior, including responses to anxiogenic situations and psychoactive substances. Plays a role in intestinal smooth muscle contraction, and may play a role in arterial vasoconstriction. This Rattus norvegicus (Rat) protein is 5-hydroxytryptamine receptor 2A (Htr2a).